Reading from the N-terminus, the 740-residue chain is MESLIKSQHAQQLAGHKNTTGKTPSMEMIPATGLAMSSDESMMLKLIQQTHSPDAREVQVRGLLSLVEDILDRATLDSEDTNASMLPLPTEDKLMQSSMMSVLDSVSYAIDRVACEIAYKSLTGSDSHEITMSVFEHLSSFQWDGKLVLTLAAFALNYGEFWLLVQFYSKNQLAKSLAMLKLVPVQNRVTLESVSQGLNDLIREMKSVTACVVELSELPDRYITPDVPQLSRILSTIPIAVYWTIRSVIACISQINMITAMGHEMMNTQMDLWETSMLANKLKNIHDHLAETLRLCYRHIEKQRSSESLKVLHSLFDTTHIDNMKILTALVHPKPHITPLQDGLTKRKVHLDVLRRKTVLLLISDLNILQDELSIFEQIYTESRRNLVGVDGKSHMPYEVVWVPVVDPIEDFERSPILQKKFEDLRDPMPWYSVDSPKLIERHVVEFMRGRWHFMNKPILVVIDPQGNEASLNALHMIWIWGTEAFPFTRSREEELWRRETFSLNLIVDGIDSVIFNWIKPDNYIFLYGGDDLDWIRRFTMAAKATAKDSNVNLEMAYVGKRNHSHREQIRRISEVIRSENLSHSWAEPALMWFFWTRLESMLYSKIQLGKADDHDDVMQGIKKILSYDKLGGWALLSKGPEIVMIAHGAIERTMSVYDRTWKTHVPTKGYTKAMSDHHHDEVLRETGKPCGHFDFHITARSGRIPEKMNCFECQRPMEKYMSFSCCHDEKLHEDENYNF.

Residues 1–23 show a composition bias toward polar residues; sequence MESLIKSQHAQQLAGHKNTTGKT. A disordered region spans residues 1–27; sequence MESLIKSQHAQQLAGHKNTTGKTPSME.

Can form homodimer. As to expression, expressed in phloem sieve elements.

Its function is as follows. Scaffold protein required to form the phloem filament matrix in sieve elements. This is Protein SIEVE ELEMENT OCCLUSION B from Arabidopsis thaliana (Mouse-ear cress).